The following is a 397-amino-acid chain: Acetate kinase (397 aa).

Asn8 lines the Mg(2+) pocket. Lys15 is an ATP binding site. Position 89 (Arg89) interacts with substrate. Catalysis depends on Asp146, which acts as the Proton donor/acceptor. Residues 206 to 210, 281 to 283, and 328 to 332 each bind ATP; these read HIGNG, DLR, and GVGEN. Glu381 contacts Mg(2+).

Belongs to the acetokinase family. Homodimer. It depends on Mg(2+) as a cofactor. Mn(2+) is required as a cofactor.

The protein localises to the cytoplasm. The enzyme catalyses acetate + ATP = acetyl phosphate + ADP. It participates in metabolic intermediate biosynthesis; acetyl-CoA biosynthesis; acetyl-CoA from acetate: step 1/2. Its function is as follows. Catalyzes the formation of acetyl phosphate from acetate and ATP. Can also catalyze the reverse reaction. This is Acetate kinase from Oceanobacillus iheyensis (strain DSM 14371 / CIP 107618 / JCM 11309 / KCTC 3954 / HTE831).